Reading from the N-terminus, the 175-residue chain is Alpha-crystallin B chain (175 aa).

An N-acetylmethionine modification is found at methionine 1. Serine 19 is modified (phosphoserine). The O-linked (GlcNAc) serine glycan is linked to serine 41. Residues serine 45 and serine 59 each carry the phosphoserine modification. Residues 56–164 (RAPSWFDTGL…PERTIPITRE (109 aa)) enclose the sHSP domain. Histidine 83 contributes to the Zn(2+) binding site. An N6-acetyllysine modification is found at lysine 92. Zn(2+) contacts are provided by histidine 104, glutamate 106, histidine 111, and histidine 119. The segment at 142–175 (VLTVNGPRKQVSGPERTIPITREEKPAVTAAPKK) is disordered. N6-acetyllysine is present on lysine 166. Threonine 170 is a glycosylation site (O-linked (GlcNAc) threonine).

This sequence belongs to the small heat shock protein (HSP20) family. As to quaternary structure, heteromer composed of three CRYAA and one CRYAB subunits. Aggregates with homologous proteins, including the small heat shock protein HSPB1, to form large heteromeric complexes. Inter-subunit bridging via zinc ions enhances stability, which is crucial as there is no protein turn over in the lens. Interacts with HSPBAP1 and TTN/titin. Interacts with TMEM109; in the cellular response to DNA damage. Interacts with DES; binds rapidly during early stages of DES filament assembly and a reduced binding seen in the later stages. Interacts with TMED10; the interaction mediates the translocation from the cytoplasm into the ERGIC (endoplasmic reticulum-Golgi intermediate compartment) and thereby secretion. Interacts with ATP6V1A and with MTOR, forming a ternary complex.

Its subcellular location is the cytoplasm. The protein localises to the nucleus. It is found in the secreted. It localises to the lysosome. In terms of biological role, may contribute to the transparency and refractive index of the lens. Has chaperone-like activity, preventing aggregation of various proteins under a wide range of stress conditions. In lens epithelial cells, stabilizes the ATP6V1A protein, preventing its degradation by the proteasome. The sequence is that of Alpha-crystallin B chain (CRYAB) from Macaca fascicularis (Crab-eating macaque).